The following is a 302-amino-acid chain: Arginase (302 aa).

Mn(2+) is bound by residues histidine 103, aspartate 126, histidine 128, and aspartate 130. Residues 128–132 (HGDLN), 139–141 (SGN), and aspartate 180 contribute to the substrate site. 2 residues coordinate Mn(2+): aspartate 229 and aspartate 231. Substrate is bound by residues threonine 243 and glutamate 274.

Belongs to the arginase family. Mn(2+) serves as cofactor.

The enzyme catalyses L-arginine + H2O = urea + L-ornithine. The protein operates within nitrogen metabolism; urea cycle; L-ornithine and urea from L-arginine: step 1/1. The chain is Arginase (arg) from Staphylococcus aureus (strain COL).